We begin with the raw amino-acid sequence, 146 residues long: Hemoglobin subunit beta-2 (146 aa).

Positions 2 to 146 constitute a Globin domain; the sequence is HWTAEEKQLV…VAHALAYHYH (145 aa). Heme b-binding residues include histidine 63 and histidine 92.

This sequence belongs to the globin family. As to quaternary structure, there are three forms of hemoglobin in Sphenodon: A, A' and D. Hb A is a tetramer of two alpha-A and two beta-1, Hb A' is a tetramer of two alpha-a and two beta-2, Hb D is a tetramer of two alpha-D and two beta-2.

Involved in oxygen transport from the lung to the various peripheral tissues. The protein is Hemoglobin subunit beta-2 (HBB2) of Sphenodon punctatus (Tuatara).